We begin with the raw amino-acid sequence, 909 residues long: Protein translocase subunit SecA (909 aa).

ATP is bound by residues Gln87, 105 to 109 (GEGKT), and Asp507. The disordered stretch occupies residues 834 to 909 (EAVEEQRRRQ…KYKQCCGKLS (76 aa)). The span at 837–848 (EEQRRRQGDMQY) shows a compositional bias: basic and acidic residues. Residues 859–871 (QGAGGEGAAGGTA) show a composition bias toward gly residues. 4 residues coordinate Zn(2+): Cys893, Cys895, Cys904, and Cys905.

This sequence belongs to the SecA family. In terms of assembly, monomer and homodimer. Part of the essential Sec protein translocation apparatus which comprises SecA, SecYEG and auxiliary proteins SecDF-YajC and YidC. Zn(2+) serves as cofactor.

The protein localises to the cell inner membrane. It is found in the cytoplasm. The catalysed reaction is ATP + H2O + cellular proteinSide 1 = ADP + phosphate + cellular proteinSide 2.. Functionally, part of the Sec protein translocase complex. Interacts with the SecYEG preprotein conducting channel. Has a central role in coupling the hydrolysis of ATP to the transfer of proteins into and across the cell membrane, serving both as a receptor for the preprotein-SecB complex and as an ATP-driven molecular motor driving the stepwise translocation of polypeptide chains across the membrane. The chain is Protein translocase subunit SecA from Alkalilimnicola ehrlichii (strain ATCC BAA-1101 / DSM 17681 / MLHE-1).